We begin with the raw amino-acid sequence, 242 residues long: MNAEKTSVAPNVDHAEIAKFEAVASRWWDLEGEFKPLHRINPLRLGYIAERSGGLFGKKVLDVGCGGGILAESMAREGATVTGLDMGAEPLQVARLHALESGIQVDYVQETVEEHAAKHPQQYDVVTCMEMLEHVPDPQSVVHACARLVKPGGQVFFSTINRNGKAWLMAVVGAEYVMKMVPKGTHDVKKFIKPAELLGWVDQTTLKEQHIIGLHYNPLTNTFKLAPGVDVNYMLHTTAKQD.

Residues arginine 44, glycine 64, aspartate 85, and methionine 129 each contribute to the S-adenosyl-L-methionine site.

Belongs to the methyltransferase superfamily. UbiG/COQ3 family.

It catalyses the reaction a 3-demethylubiquinol + S-adenosyl-L-methionine = a ubiquinol + S-adenosyl-L-homocysteine + H(+). The catalysed reaction is a 3-(all-trans-polyprenyl)benzene-1,2-diol + S-adenosyl-L-methionine = a 2-methoxy-6-(all-trans-polyprenyl)phenol + S-adenosyl-L-homocysteine + H(+). It functions in the pathway cofactor biosynthesis; ubiquinone biosynthesis. Functionally, O-methyltransferase that catalyzes the 2 O-methylation steps in the ubiquinone biosynthetic pathway. The sequence is that of Ubiquinone biosynthesis O-methyltransferase from Klebsiella pneumoniae subsp. pneumoniae (strain ATCC 700721 / MGH 78578).